We begin with the raw amino-acid sequence, 88 residues long: Sigma-conotoxin GVIIIA (88 aa).

An N-terminal signal peptide occupies residues 1-20; the sequence is MMSKMGAMFVLLLLFTLASS. A propeptide spanning residues 21–46 is cleaved from the precursor; the sequence is LQEGDVQARKTRLKSDFYRALARDDR. Pro55 bears the 4-hydroxyproline mark. Trp80 is subject to 6'-bromotryptophan. Position 87 is a serine amide (Ser87).

Belongs to the conotoxin S superfamily. In terms of processing, contains 5 disulfide bonds. In terms of tissue distribution, expressed by the venom duct.

It localises to the secreted. Sigma-conotoxins bind and inhibit serotonin-gated ion channels. This peptide selectively and reversibly inhibits 5-hydroxytryptamine 3 receptor (HTR3A) through competitive antagonism (IC(50)=53-86.8 nM). The sequence is that of Sigma-conotoxin GVIIIA from Conus geographus (Geography cone).